The primary structure comprises 258 residues: Acyl-[acyl-carrier-protein]--UDP-N-acetylglucosamine O-acyltransferase (258 aa).

It belongs to the transferase hexapeptide repeat family. LpxA subfamily. As to quaternary structure, homotrimer.

It localises to the cytoplasm. It carries out the reaction a (3R)-hydroxyacyl-[ACP] + UDP-N-acetyl-alpha-D-glucosamine = a UDP-3-O-[(3R)-3-hydroxyacyl]-N-acetyl-alpha-D-glucosamine + holo-[ACP]. The protein operates within glycolipid biosynthesis; lipid IV(A) biosynthesis; lipid IV(A) from (3R)-3-hydroxytetradecanoyl-[acyl-carrier-protein] and UDP-N-acetyl-alpha-D-glucosamine: step 1/6. In terms of biological role, involved in the biosynthesis of lipid A, a phosphorylated glycolipid that anchors the lipopolysaccharide to the outer membrane of the cell. The chain is Acyl-[acyl-carrier-protein]--UDP-N-acetylglucosamine O-acyltransferase from Pseudomonas fluorescens (strain ATCC BAA-477 / NRRL B-23932 / Pf-5).